A 762-amino-acid chain; its full sequence is Centrosomal protein of 85 kDa (762 aa).

Disordered stretches follow at residues 1–26 (MAMQ…IQKG) and 94–119 (VMPS…SKLP). Polar residues-rich tracts occupy residues 14–26 (HVTS…IQKG) and 98–111 (TLGT…STPV). A Phosphoserine modification is found at Ser-17. A phosphoserine mark is found at Ser-126 and Ser-141. Positions 257-433 (GLSKPLPSQV…QLIRESLKVA (177 aa)) are mediates interaction with NEK2 and is required for its function in the suppression of centrosome disjunction. Coiled-coil stretches lie at residues 334-657 (EHLL…RQAQ) and 723-750 (PDVI…MSDR). Residues 434–476 (LQKHSEEVKKQEERVKGRDKHINNLKKKCQKESEQNREKQQRI) are required for centrosome localization and for its function in the suppression of centrosome disjunction. Composition is skewed to basic and acidic residues over residues 443–455 (KQEE…DKHI) and 463–474 (QKESEQNREKQQ). Disordered regions lie at residues 443–474 (KQEE…EKQQ) and 541–570 (EAEF…VEME). Phosphoserine is present on Ser-623.

Belongs to the CEP85 family. In terms of assembly, homodimer. Interacts with STIL (via N-terminus); this interaction is essential for robust PLK4 activation and efficient centriole assembly and for PLK4-dependent cell migration. Interacts with PLK4; required for CEP85 to be able to drive centriole duplication and cell migration.

Its subcellular location is the cytoplasm. It localises to the cytoskeleton. It is found in the microtubule organizing center. The protein resides in the centrosome. The protein localises to the spindle pole. Its subcellular location is the nucleus. It localises to the nucleolus. It is found in the centriole. The protein resides in the cell cortex. Its function is as follows. Acts as a regulator of centriole duplication through a direct interaction with STIL, a key factor involved in the early steps of centriole formation. The CEP85-STIL protein complex acts as a modulator of PLK4-driven cytoskeletal rearrangements and directional cell motility. Acts as a negative regulator of NEK2 to maintain the centrosome integrity in interphase. Suppresses centrosome disjunction by inhibiting NEK2 kinase activity. The protein is Centrosomal protein of 85 kDa of Homo sapiens (Human).